We begin with the raw amino-acid sequence, 208 residues long: Large ribosomal subunit protein uL4 (208 aa).

Positions 49-78 (KAKGISDISGTTAKPYRQKHTGRARQGSLR) are disordered.

The protein belongs to the universal ribosomal protein uL4 family. As to quaternary structure, part of the 50S ribosomal subunit.

Functionally, one of the primary rRNA binding proteins, this protein initially binds near the 5'-end of the 23S rRNA. It is important during the early stages of 50S assembly. It makes multiple contacts with different domains of the 23S rRNA in the assembled 50S subunit and ribosome. In terms of biological role, forms part of the polypeptide exit tunnel. The polypeptide is Large ribosomal subunit protein uL4 (Anaplasma phagocytophilum (strain HZ)).